We begin with the raw amino-acid sequence, 318 residues long: 4-diphosphocytidyl-2-C-methyl-D-erythritol kinase (318 aa).

Lys13 is an active-site residue. 101-111 (PVAGGMAGGSA) lines the ATP pocket. Asp143 is an active-site residue. The interval 298 to 318 (PGARLVTDDRADRPTPPQVHA) is disordered.

This sequence belongs to the GHMP kinase family. IspE subfamily.

The enzyme catalyses 4-CDP-2-C-methyl-D-erythritol + ATP = 4-CDP-2-C-methyl-D-erythritol 2-phosphate + ADP + H(+). The protein operates within isoprenoid biosynthesis; isopentenyl diphosphate biosynthesis via DXP pathway; isopentenyl diphosphate from 1-deoxy-D-xylulose 5-phosphate: step 3/6. Functionally, catalyzes the phosphorylation of the position 2 hydroxy group of 4-diphosphocytidyl-2C-methyl-D-erythritol. This Saccharopolyspora erythraea (strain ATCC 11635 / DSM 40517 / JCM 4748 / NBRC 13426 / NCIMB 8594 / NRRL 2338) protein is 4-diphosphocytidyl-2-C-methyl-D-erythritol kinase.